We begin with the raw amino-acid sequence, 211 residues long: Ribosomal RNA large subunit methyltransferase E (211 aa).

S-adenosyl-L-methionine-binding residues include glycine 55, tryptophan 57, aspartate 75, aspartate 93, and aspartate 117. Residue lysine 157 is the Proton acceptor of the active site.

This sequence belongs to the class I-like SAM-binding methyltransferase superfamily. RNA methyltransferase RlmE family.

It localises to the cytoplasm. The enzyme catalyses uridine(2552) in 23S rRNA + S-adenosyl-L-methionine = 2'-O-methyluridine(2552) in 23S rRNA + S-adenosyl-L-homocysteine + H(+). Its function is as follows. Specifically methylates the uridine in position 2552 of 23S rRNA at the 2'-O position of the ribose in the fully assembled 50S ribosomal subunit. The protein is Ribosomal RNA large subunit methyltransferase E of Methanothermobacter thermautotrophicus (strain ATCC 29096 / DSM 1053 / JCM 10044 / NBRC 100330 / Delta H) (Methanobacterium thermoautotrophicum).